The primary structure comprises 228 residues: MTEYTFDDLAVVMGTYNEEQAIGSVLADIDRITDGRAEVVCVDGSDDRTPEIARKMGARVIEQEPQGYGVAVEAAVLAPDRPVVVTTDCDDTYPMEYLPKFLDLINDGYDVVSGDRITKGAETMPRLNRAGNIAFARLASFLMGATVHDTTTGMRAYRRELLHDIEWTENTGLSAELLIRPAMRGYNIAEVPIPYRERAGETKLDPFAGGAAIGKSIVKVCLEERLRL.

It belongs to the glycosyltransferase 2 family.

Glycosyltransferase that adds a monosaccharide to dolichol phosphate, thereby being responsible for generating one of the three monosaccharide-modified dolichol phosphates. The subunit onto which additional sugars are added is not known. This is Dolichyl-phosphate hexose transferase HVO_1613 from Haloferax volcanii (strain ATCC 29605 / DSM 3757 / JCM 8879 / NBRC 14742 / NCIMB 2012 / VKM B-1768 / DS2) (Halobacterium volcanii).